Reading from the N-terminus, the 220-residue chain is Protein-L-isoaspartate O-methyltransferase (220 aa).

The active site involves Ser65.

Belongs to the methyltransferase superfamily. L-isoaspartyl/D-aspartyl protein methyltransferase family.

Its subcellular location is the cytoplasm. The catalysed reaction is [protein]-L-isoaspartate + S-adenosyl-L-methionine = [protein]-L-isoaspartate alpha-methyl ester + S-adenosyl-L-homocysteine. In terms of biological role, catalyzes the methyl esterification of L-isoaspartyl residues in peptides and proteins that result from spontaneous decomposition of normal L-aspartyl and L-asparaginyl residues. It plays a role in the repair and/or degradation of damaged proteins. This chain is Protein-L-isoaspartate O-methyltransferase (pcm), found in Pyrococcus horikoshii (strain ATCC 700860 / DSM 12428 / JCM 9974 / NBRC 100139 / OT-3).